The chain runs to 55 residues: Large ribosomal subunit protein bL33 (55 aa).

Belongs to the bacterial ribosomal protein bL33 family.

The polypeptide is Large ribosomal subunit protein bL33 (Photorhabdus laumondii subsp. laumondii (strain DSM 15139 / CIP 105565 / TT01) (Photorhabdus luminescens subsp. laumondii)).